The following is a 327-amino-acid chain: GTPase Obg (327 aa).

An Obg domain is found at 1–159 (MQFIDQANII…WEVQLELKLL (159 aa)). An OBG-type G domain is found at 160 to 327 (AEVGIIGLPN…SLLSEVWKRI (168 aa)). ATP is bound by residues 166–173 (GLPNAGKS), 191–195 (FTTLI), 213–216 (DIPG), 280–283 (NKME), and 309–311 (SSS). Positions 173 and 193 each coordinate Mg(2+).

Belongs to the TRAFAC class OBG-HflX-like GTPase superfamily. OBG GTPase family. As to quaternary structure, monomer. Requires Mg(2+) as cofactor.

The protein resides in the cytoplasm. Its function is as follows. An essential GTPase which binds GTP, GDP and possibly (p)ppGpp with moderate affinity, with high nucleotide exchange rates and a fairly low GTP hydrolysis rate. Plays a role in control of the cell cycle, stress response, ribosome biogenesis and in those bacteria that undergo differentiation, in morphogenesis control. This is GTPase Obg from Prochlorococcus marinus (strain MIT 9215).